The primary structure comprises 284 residues: Putative xyloglucan endotransglucosylase/hydrolase protein 13 (284 aa).

The first 24 residues, Met1 to Gly24, serve as a signal peptide directing secretion. One can recognise a GH16 domain in the interval Ser25–Tyr214. Glu100 (nucleophile) is an active-site residue. Glu104 acts as the Proton donor in catalysis. A xyloglucan-binding site is contributed by Glu104. The N-linked (GlcNAc...) asparagine glycan is linked to Asn108. Xyloglucan-binding positions include His117–Asn119, Asn127–Glu129, Asp193–Trp194, and Gly198. Disulfide bonds link Cys223–Cys234 and Cys267–Cys281. A xyloglucan-binding site is contributed by Arg272.

This sequence belongs to the glycosyl hydrolase 16 family. XTH group 2 subfamily. Contains at least one intrachain disulfide bond essential for its enzymatic activity.

The protein localises to the secreted. Its subcellular location is the cell wall. It localises to the extracellular space. The protein resides in the apoplast. The catalysed reaction is breaks a beta-(1-&gt;4) bond in the backbone of a xyloglucan and transfers the xyloglucanyl segment on to O-4 of the non-reducing terminal glucose residue of an acceptor, which can be a xyloglucan or an oligosaccharide of xyloglucan.. Its function is as follows. May catalyze xyloglucan endohydrolysis (XEH) and/or endotransglycosylation (XET). Cleaves and religates xyloglucan polymers, an essential constituent of the primary cell wall, and thereby participates in cell wall construction of growing tissues. This is Putative xyloglucan endotransglucosylase/hydrolase protein 13 (XTH13) from Arabidopsis thaliana (Mouse-ear cress).